Consider the following 400-residue polypeptide: Argininosuccinate synthase (400 aa).

ATP contacts are provided by residues 10–18 (AYSGGVDTS) and Ala-38. L-citrulline is bound at residue Tyr-89. ATP is bound at residue Gly-119. Residues Thr-121, Asn-125, and Asp-126 each coordinate L-aspartate. Asn-125 is an L-citrulline binding site. Residues Arg-129, Ser-177, Ser-186, Glu-262, and Tyr-274 each coordinate L-citrulline.

The protein belongs to the argininosuccinate synthase family. Type 1 subfamily. As to quaternary structure, homotetramer.

It localises to the cytoplasm. The enzyme catalyses L-citrulline + L-aspartate + ATP = 2-(N(omega)-L-arginino)succinate + AMP + diphosphate + H(+). It participates in amino-acid biosynthesis; L-arginine biosynthesis; L-arginine from L-ornithine and carbamoyl phosphate: step 2/3. This is Argininosuccinate synthase from Nostoc punctiforme (strain ATCC 29133 / PCC 73102).